The chain runs to 209 residues: GTP cyclohydrolase 1 (209 aa).

Residues Cys89, His92, and Cys163 each contribute to the Zn(2+) site.

This sequence belongs to the GTP cyclohydrolase I family. As to quaternary structure, toroid-shaped homodecamer, composed of two pentamers of five dimers.

The enzyme catalyses GTP + H2O = 7,8-dihydroneopterin 3'-triphosphate + formate + H(+). It participates in cofactor biosynthesis; 7,8-dihydroneopterin triphosphate biosynthesis; 7,8-dihydroneopterin triphosphate from GTP: step 1/1. This chain is GTP cyclohydrolase 1, found in Sulfolobus acidocaldarius (strain ATCC 33909 / DSM 639 / JCM 8929 / NBRC 15157 / NCIMB 11770).